We begin with the raw amino-acid sequence, 454 residues long: tRNA modification GTPase MnmE (454 aa).

3 residues coordinate (6S)-5-formyl-5,6,7,8-tetrahydrofolate: Arg23, Glu80, and Lys120. Residues 216 to 377 (GMKVVIAGRP…LRNHLKQSMG (162 aa)) form the TrmE-type G domain. Residue Asn226 coordinates K(+). Residues 226–231 (NAGKSS), 245–251 (TDIAGTT), 270–273 (DTAG), 335–338 (NKAD), and 358–360 (SAR) each bind GTP. A Mg(2+)-binding site is contributed by Ser230. K(+) is bound by residues Thr245, Ile247, and Thr250. A Mg(2+)-binding site is contributed by Thr251. Residue Lys454 participates in (6S)-5-formyl-5,6,7,8-tetrahydrofolate binding.

It belongs to the TRAFAC class TrmE-Era-EngA-EngB-Septin-like GTPase superfamily. TrmE GTPase family. Homodimer. Heterotetramer of two MnmE and two MnmG subunits. K(+) serves as cofactor.

The protein localises to the cytoplasm. Functionally, exhibits a very high intrinsic GTPase hydrolysis rate. Involved in the addition of a carboxymethylaminomethyl (cmnm) group at the wobble position (U34) of certain tRNAs, forming tRNA-cmnm(5)s(2)U34. The sequence is that of tRNA modification GTPase MnmE from Escherichia coli O139:H28 (strain E24377A / ETEC).